We begin with the raw amino-acid sequence, 181 residues long: Protein Syd (181 aa).

It belongs to the Syd family.

Its subcellular location is the cell inner membrane. In terms of biological role, interacts with the SecY protein in vivo. May bind preferentially to an uncomplexed state of SecY, thus functioning either as a chelating agent for excess SecY in the cell or as a regulatory factor that negatively controls the translocase function. The chain is Protein Syd from Klebsiella pneumoniae subsp. pneumoniae (strain ATCC 700721 / MGH 78578).